A 96-amino-acid polypeptide reads, in one-letter code: MYAIVKTGGKQYKAEPGRLLKVEKLCANEGETVELPAICVRLDNGELKTEGKVKATVVKHDKHKKILVFKYKRKKNYKRLKGHRQPYTLIKVEEIV.

This sequence belongs to the bacterial ribosomal protein bL21 family. In terms of assembly, part of the 50S ribosomal subunit. Contacts protein L20.

Functionally, this protein binds to 23S rRNA in the presence of protein L20. In Sulfurihydrogenibium sp. (strain YO3AOP1), this protein is Large ribosomal subunit protein bL21.